Consider the following 141-residue polypeptide: Piercer of microtubule wall 1 protein (141 aa).

The protein belongs to the PIERCE1 family.

The protein localises to the cytoplasm. The protein resides in the cytoskeleton. It localises to the cilium axoneme. In terms of biological role, microtubule inner protein involved in the attachment of outer dynein arms (ODAs) to dynein-decorated doublet microtubules (DMTs) in cilia axoneme, which is required for motile cilia beating. Functions at the initial step of left-right asymmetry specification of the visceral organs. The polypeptide is Piercer of microtubule wall 1 protein (pierce1) (Salmo salar (Atlantic salmon)).